The sequence spans 242 residues: Probable transcriptional regulatory protein BTH_I1015 (242 aa).

The protein belongs to the TACO1 family.

Its subcellular location is the cytoplasm. The protein is Probable transcriptional regulatory protein BTH_I1015 of Burkholderia thailandensis (strain ATCC 700388 / DSM 13276 / CCUG 48851 / CIP 106301 / E264).